A 564-amino-acid chain; its full sequence is Large neutral amino acids transporter small subunit 3 (564 aa).

The helical transmembrane segment at 20–40 threads the bilayer; it reads VVENLFFSAVLLGWASLLIML. N-linked (GlcNAc...) asparagine glycosylation is found at Asn54 and Asn57. 5 consecutive transmembrane segments (helical) span residues 78-98, 105-124, 131-151, 165-185, and 191-211; these read LGFTIGSFLLSATTLPLGILM, PLRLVGSACFAASCTLMALA, LSPLIFLALSLNGFAGICLTF, STFMALMIGSYASSAITFPGI, and AGVPFTVIMFTWSGLACLIFL. A phosphoserine mark is found at Ser262 and Ser267. 2 helical membrane-spanning segments follow: residues 303 to 323 and 357 to 377; these read IFLWSLVTMGMTQLRVIFYMG and SIFGVMQLLCLLTCPLIGYIM. N-linked (GlcNAc...) asparagine glycosylation is present at Asn396. Ser398 carries the post-translational modification Phosphoserine. A run of 4 helical transmembrane segments spans residues 424 to 444, 451 to 471, 490 to 510, and 515 to 535; these read AINAFTLTNILLVGFGIACLI, LLAFVLHTIVRGFFHSACGGL, LISAVFALLQQLLFMAMVGPL, and FWVNLGLLLLSFLGFLLPSYL. Asn558 carries an N-linked (GlcNAc...) asparagine glycan.

The protein belongs to the SLC43A transporter (TC 2.A.1.44) family. In terms of tissue distribution, expressed in the kidney cortex as well as liver, pancreas, and skeletal muscle. In kidney expressed in the glomerular tuft (at protein level). Expressed in liver, skeletal muscle and pancreas (at protein level).

Its subcellular location is the cell membrane. It is found in the apical cell membrane. The protein resides in the endoplasmic reticulum membrane. It carries out the reaction D-leucine(in) = D-leucine(out). It catalyses the reaction L-leucine(in) = L-leucine(out). The catalysed reaction is L-isoleucine(in) = L-isoleucine(out). The enzyme catalyses L-methionine(in) = L-methionine(out). It carries out the reaction L-phenylalanine(in) = L-phenylalanine(out). It catalyses the reaction L-valine(in) = L-valine(out). Uniport that mediates the transport of neutral amino acids such as L-leucine, L-isoleucine, L-valine, and L-phenylalanine. The transport activity is sodium ions-independent, electroneutral and mediated by a facilitated diffusion. The sequence is that of Large neutral amino acids transporter small subunit 3 from Mus musculus (Mouse).